A 293-amino-acid polypeptide reads, in one-letter code: 4-hydroxy-tetrahydrodipicolinate synthase (293 aa).

Residue T46 coordinates pyruvate. The active-site Proton donor/acceptor is Y133. K161 functions as the Schiff-base intermediate with substrate in the catalytic mechanism. V202 provides a ligand contact to pyruvate.

The protein belongs to the DapA family. Homotetramer; dimer of dimers.

Its subcellular location is the cytoplasm. It catalyses the reaction L-aspartate 4-semialdehyde + pyruvate = (2S,4S)-4-hydroxy-2,3,4,5-tetrahydrodipicolinate + H2O + H(+). Its pathway is amino-acid biosynthesis; L-lysine biosynthesis via DAP pathway; (S)-tetrahydrodipicolinate from L-aspartate: step 3/4. Functionally, catalyzes the condensation of (S)-aspartate-beta-semialdehyde [(S)-ASA] and pyruvate to 4-hydroxy-tetrahydrodipicolinate (HTPA). This is 4-hydroxy-tetrahydrodipicolinate synthase from Wolbachia pipientis subsp. Culex pipiens (strain wPip).